We begin with the raw amino-acid sequence, 116 residues long: Ribonuclease P protein component (116 aa).

It belongs to the RnpA family. In terms of assembly, consists of a catalytic RNA component (M1 or rnpB) and a protein subunit.

It catalyses the reaction Endonucleolytic cleavage of RNA, removing 5'-extranucleotides from tRNA precursor.. Functionally, RNaseP catalyzes the removal of the 5'-leader sequence from pre-tRNA to produce the mature 5'-terminus. It can also cleave other RNA substrates such as 4.5S RNA. The protein component plays an auxiliary but essential role in vivo by binding to the 5'-leader sequence and broadening the substrate specificity of the ribozyme. The chain is Ribonuclease P protein component from Caldanaerobacter subterraneus subsp. tengcongensis (strain DSM 15242 / JCM 11007 / NBRC 100824 / MB4) (Thermoanaerobacter tengcongensis).